The sequence spans 261 residues: HTH-type transcriptional repressor CsqR (261 aa).

The HTH deoR-type domain occupies 8–63 (GNPRHDQLLMLIAERGYMNIDELANLLDVSTQTVRRDIRKLSEQGLITRHHGGAGR). The segment at residues 25–44 (MNIDELANLLDVSTQTVRRD) is a DNA-binding region (H-T-H motif).

As to quaternary structure, monomer in the absence of DNA. Exhibits a high level of cooperativity once it is bound to its target DNA.

Inactivated in the presence of the effectors sulfoquinovose and sulfoquinovosyl glycerol, leading to the de-repression of the target genes. Involved in the regulation of the sulfoquinovose operon. Represses the expression of the yihUTS operon and of the yihV and csqR genes. Binds DNA inside the spacer between the bidirectional transcription units comprising the yihUTS operon and the yihV gene, and upstream the csqR gene itself. In Escherichia coli (strain K12), this protein is HTH-type transcriptional repressor CsqR.